We begin with the raw amino-acid sequence, 140 residues long: Methylglyoxal synthase (140 aa).

Residues 1-140 (MRSKPRIALI…DQAAADDAAP (140 aa)) enclose the MGS-like domain. Residues His-12, Lys-16, 38–41 (TGTT), and 58–59 (SG) each bind substrate. The Proton donor/acceptor role is filled by Asp-64. Substrate is bound at residue His-91.

This sequence belongs to the methylglyoxal synthase family.

The catalysed reaction is dihydroxyacetone phosphate = methylglyoxal + phosphate. Functionally, catalyzes the formation of methylglyoxal from dihydroxyacetone phosphate. In Cupriavidus metallidurans (strain ATCC 43123 / DSM 2839 / NBRC 102507 / CH34) (Ralstonia metallidurans), this protein is Methylglyoxal synthase.